The primary structure comprises 871 residues: Metabotropic glutamate receptor 6 (871 aa).

Positions 1–23 (MGRLPVLLLWLAWWLSQAGIACG) are cleaved as a signal peptide. Over 24-579 (AGSVRLAGGL…VVRLTWSSPW (556 aa)) the chain is Extracellular. A disulfide bond links C51 and C93. Residues S148, 169 to 171 (AST), and Y219 contribute to the L-glutamate site. Disulfide bonds link C238/C530, C361/C377, C417/C424, C512/C531, C516/C534, C537/C549, and C552/C565. N290 is a glycosylation site (N-linked (GlcNAc...) asparagine). Position 301 (D301) interacts with L-glutamate. K394 serves as a coordination point for L-glutamate. 2 N-linked (GlcNAc...) asparagine glycosylation sites follow: N445 and N473. N-linked (GlcNAc...) asparagine glycosylation is present at N561. The helical transmembrane segment at 580–602 (AALPLLLAVLGIMATTTIMATFM) threads the bilayer. The Cytoplasmic portion of the chain corresponds to 603-616 (RHNDTPIVRASGRE). Residues 617 to 637 (LSYVLLTGIFLIYAITFLMVA) traverse the membrane as a helical segment. Over 638–648 (EPCAAICAARR) the chain is Extracellular. Residues 649–667 (LLLGLGTTLSYSALLTKTN) form a helical membrane-spanning segment. At 668–691 (RIYRIFEQGKRSVTPPPFISPTSQ) the chain is on the cytoplasmic side. Residues 692–712 (LVITFGLTSLQVVGVIAWLGA) traverse the membrane as a helical segment. Residues 713 to 742 (QPPHSVIDYEEQRTVDPEQARGVLKCDMSD) are Extracellular-facing. A helical transmembrane segment spans residues 743–764 (LSLIGCLGYSLLLMVTCTVYAI). Residues 765 to 777 (KARGVPETFNEAK) lie on the Cytoplasmic side of the membrane. The chain crosses the membrane as a helical span at residues 778 to 800 (PIGFTMYTTCIIWLAFVPIFFGT). Residues 801-813 (AQSAEKIYIQTTT) lie on the Extracellular side of the membrane. The helical transmembrane segment at 814–839 (LTVSLSLSASVSLGMLYVPKTYVILF) threads the bilayer. Topologically, residues 840 to 871 (HPEQNVQKRKRSLKKTSTMAAPPQNENAEDAK) are cytoplasmic. Residues 850–871 (RSLKKTSTMAAPPQNENAEDAK) form a disordered region.

Belongs to the G-protein coupled receptor 3 family. Homodimer. Interacts with GPR179. Interacts with photoreceptor synaptic protein LRIT1 (via its N-terminal extracellular domain). In terms of tissue distribution, restricted expression in the inner nuclear layer of the retina.

It is found in the cell membrane. It localises to the endoplasmic reticulum membrane. The protein resides in the golgi apparatus membrane. The protein localises to the cell projection. Its subcellular location is the dendrite. Its function is as follows. G-protein coupled receptor for glutamate. Ligand binding causes a conformation change that triggers signaling via guanine nucleotide-binding proteins (G proteins) and modulates the activity of down-stream effectors, such as adenylate cyclase. Signaling inhibits adenylate cyclase activity. Signaling stimulates TRPM1 channel activity and Ca(2+) uptake. Required for normal vision. This Rattus norvegicus (Rat) protein is Metabotropic glutamate receptor 6 (Grm6).